The chain runs to 242 residues: Platinum sensitivity protein 3 (242 aa).

In terms of assembly, component of the SHU complex composed of at least CSM2, PSY3, SHU1 and SHU2.

It localises to the nucleus. Functionally, required for resistance to the DNA-damaging agents methyl methanesulfonate (MMS), cisplatin and oxaliplatin, but not to mitomycin C. Plays a role in protection against mutation accumulation. May be a component of the recombination-repair pathway. This chain is Platinum sensitivity protein 3 (PSY3), found in Saccharomyces cerevisiae (strain ATCC 204508 / S288c) (Baker's yeast).